The primary structure comprises 396 residues: Calsequestrin-1 (396 aa).

The signal sequence occupies residues 1–34 (MSATDRMGPRAVPGLRLALLLLLVLGTPKSGVQG). Tyr43 is modified (phosphotyrosine). Residue Ser81 is modified to Phosphoserine. Thr124 is modified (phosphothreonine). Residue Ser216 is modified to Phosphoserine. N-linked (GlcNAc...) asparagine glycosylation occurs at Asn350.

This sequence belongs to the calsequestrin family. As to quaternary structure, monomer; increases in response to a depletion of intracellular calcium. Homodimer. Homotetramer and homopolymer. Can form linear homooligomers. Ca(2+) ions promote oligomerization. Interacts (via C-terminal end and preferentially with the monomeric form) with STIM1; this interaction increases in response to a depletion of intracellular calcium, decreases both STIM1 aggregation and clustering, interaction of STIM1 with ORAI1 and store-operated Ca(2+) entry (SOCE) activity. Interacts with ASPH and TRDN. In terms of processing, N-glycosylated. In terms of tissue distribution, expressed in myoblasts (at protein level).

The protein resides in the endoplasmic reticulum. It localises to the sarcoplasmic reticulum. It is found in the sarcoplasmic reticulum lumen. Its subcellular location is the sarcoplasmic reticulum membrane. The protein localises to the mitochondrion matrix. Its function is as follows. Calsequestrin is a high-capacity, moderate affinity, calcium-binding protein and thus acts as an internal calcium store in muscle. Calcium ions are bound by clusters of acidic residues at the protein surface, often at the interface between subunits. Can bind around 80 Ca(2+) ions. Regulates the release of lumenal Ca(2+) via the calcium release channel RYR1; this plays an important role in triggering muscle contraction. Negatively regulates store-operated Ca(2+) entry (SOCE) activity. This is Calsequestrin-1 (CASQ1) from Homo sapiens (Human).